The primary structure comprises 227 residues: Uridylate kinase (227 aa).

7 to 11 (KISGK) provides a ligand contact to ATP. Position 44 (Gly-44) interacts with UMP. ATP contacts are provided by Gly-45 and Arg-49. Residues Asp-66 and 114–120 (FQPGQST) contribute to the UMP site. ATP is bound by residues Thr-140, Asn-141, Tyr-146, and Asp-149.

It belongs to the UMP kinase family. As to quaternary structure, homohexamer.

It is found in the cytoplasm. The enzyme catalyses UMP + ATP = UDP + ADP. The protein operates within pyrimidine metabolism; CTP biosynthesis via de novo pathway; UDP from UMP (UMPK route): step 1/1. Its activity is regulated as follows. Unlike most bacteria, is not activated by GTP. UTP acts as a competitive inhibitor against both substrates. High concentration of UMP abolishes the inhibition of UTP at low ATP concentrations, indicating that UTP binds to the acceptor site (UMP site). In terms of biological role, catalyzes the reversible phosphorylation of UMP to UDP, with ATP as the most efficient phosphate donor. Is also able to phosphorylate dUMP, although much less efficiently. This Saccharolobus solfataricus (strain ATCC 35092 / DSM 1617 / JCM 11322 / P2) (Sulfolobus solfataricus) protein is Uridylate kinase (pyrH).